The sequence spans 151 residues: Deoxyuridine 5'-triphosphate nucleotidohydrolase (151 aa).

Substrate contacts are provided by residues 69-71 (RSG), Asn-82, and 86-88 (TID).

It belongs to the dUTPase family. Mg(2+) serves as cofactor.

It carries out the reaction dUTP + H2O = dUMP + diphosphate + H(+). It functions in the pathway pyrimidine metabolism; dUMP biosynthesis; dUMP from dCTP (dUTP route): step 2/2. Its function is as follows. This enzyme is involved in nucleotide metabolism: it produces dUMP, the immediate precursor of thymidine nucleotides and it decreases the intracellular concentration of dUTP so that uracil cannot be incorporated into DNA. The chain is Deoxyuridine 5'-triphosphate nucleotidohydrolase from Rhodospirillum centenum (strain ATCC 51521 / SW).